The following is a 24-amino-acid chain: Heat shock 70 kDa protein 4L (24 aa).

Thr-19 is modified (phosphothreonine).

This sequence belongs to the heat shock protein 70 family. As to quaternary structure, homodimer. In the testis, forms a complex with p53 at 32.5 degrees Celsius which is scrotal temperature but not at 37 or 42 degrees Celsius. In terms of tissue distribution, expressed at high levels in testis and at much lower levels in brain. In testis, expressed mainly in germ cells. Widespread in brain with highest expression in cerebellum and medulla oblongata. Also expressed in renal medulla of water-restricted animals.

The protein resides in the cytoplasm. It is found in the nucleus. Possesses chaperone activity in vitro where it inhibits aggregation of citrate synthase. In Rattus norvegicus (Rat), this protein is Heat shock 70 kDa protein 4L (Hspa4l).